The primary structure comprises 76 residues: Small ribosomal subunit protein uS17 (76 aa).

It belongs to the universal ribosomal protein uS17 family. As to quaternary structure, part of the 30S ribosomal subunit.

Functionally, one of the primary rRNA binding proteins, it binds specifically to the 5'-end of 16S ribosomal RNA. The polypeptide is Small ribosomal subunit protein uS17 (Ruegeria pomeroyi (strain ATCC 700808 / DSM 15171 / DSS-3) (Silicibacter pomeroyi)).